A 559-amino-acid chain; its full sequence is Acetylcholinesterase-1 (559 aa).

The N-terminal stretch at 1-21 (MMLPRCFVTVLLMSSVLYIGG) is a signal peptide. An intrachain disulfide couples Cys92 to Cys114. 142-143 (GG) serves as a coordination point for substrate. Catalysis depends on Ser223, which acts as the Acyl-ester intermediate. Ser223 bears the Phosphoserine mark. A disulfide bond links Cys276 and Cys293. Asn278 and Asn342 each carry an N-linked (GlcNAc...) asparagine glycan. Glu354 functions as the Charge relay system in the catalytic mechanism. A glycan (N-linked (GlcNAc...) asparagine) is linked at Asn374. Cysteines 432 and 550 form a disulfide. His471 (charge relay system) is an active-site residue.

It belongs to the type-B carboxylesterase/lipase family. In terms of tissue distribution, expressed by the venom gland.

It localises to the secreted. It carries out the reaction acetylcholine + H2O = choline + acetate + H(+). In terms of biological role, terminates signal transduction at the neuromuscular junction by rapid hydrolysis of the acetylcholine released into the synaptic cleft. This is Acetylcholinesterase-1 from Trittame loki (Brush-footed trapdoor spider).